The chain runs to 2078 residues: Nascent polypeptide-associated complex subunit alpha, muscle-specific form (2078 aa).

4 disordered regions span residues 1 to 21, 37 to 96, 595 to 614, and 732 to 1944; these read MPGE…QPQA, ALGQ…LGTA, LGEP…PLGV, and KSVP…KAMS. 2 stretches are compositionally biased toward polar residues: residues 9–21 and 60–75; these read VPAT…QPQA and AANQ…TIAS. Residues 775–786 show a composition bias toward low complexity; sequence SGASATASSKGT. Residues 837-847 show a composition bias toward polar residues; it reads PENSLSFQGSK. S917 bears the Phosphoserine mark. Residues 933 to 1020 show a composition bias toward pro residues; the sequence is SPSPKGAPTP…PPAVTPPSPK (88 aa). The segment covering 1045–1067 has biased composition (low complexity); that stretch reads GSPAATPLPKGAPTTPAATLPSP. The segment covering 1080–1113 has biased composition (pro residues); that stretch reads PTPPAATPPSPKGGPATPSPKGAPMPPAATPPSP. Residues 1114–1130 show a composition bias toward low complexity; that stretch reads KGGLATPPHKGAPTTPA. Composition is skewed to pro residues over residues 1131–1147 and 1154–1170; these read ATPP…PPKG. Residue S1181 is modified to Phosphoserine. Low complexity-rich tracts occupy residues 1183-1199, 1206-1222, and 1229-1245; these read KGGL…TTPA. 2 stretches are compositionally biased toward pro residues: residues 1246 to 1270 and 1292 to 1344; these read ATPP…PAAT and VTPP…PSPK. Positions 1345-1366 are enriched in low complexity; it reads GTPTLPATTPSSKGGPTTPSSK. S1397 and S1474 each carry phosphoserine. Positions 1470-1481 are enriched in pro residues; sequence VTPPSPKEPPAP. Residues 1485–1507 are compositionally biased toward low complexity; sequence ATSSSPKKAPATPAPMGAPTLPA. The span at 1611 to 1625 shows a compositional bias: pro residues; that stretch reads KEAPTPPAVTPPSPE. Low complexity predominate over residues 1626–1637; sequence KGPATPAPKGTP. The span at 1647–1656 shows a compositional bias: polar residues; it reads LKDSPTSPAS. Residues 1744 to 1756 show a composition bias toward basic and acidic residues; it reads DSSKTAKGKDASH. Residues 1794–1811 show a composition bias toward pro residues; sequence PSPPVSLPLAPSPVPTLP. Residues 1841–1845 carry the PXLXP motif; that stretch reads LPLIP. The span at 1876-1891 shows a compositional bias: polar residues; sequence SAKQPVTKNNKGSGTE. A compositionally biased stretch (acidic residues) spans 1892-1905; the sequence is SDSDESVPELEEQD. The residue at position 1906 (S1906) is a Phosphoserine; by ILK1. The segment covering 1907 to 1920 has biased composition (low complexity); sequence TQATTQQAQLAAAA. The interval 1932 to 1943 is required for DNA-binding; that stretch reads QSRSEKKARKAM. Residues 1933–1998 form the NAC-A/B domain; sequence SRSEKKARKA…AKIEDLSQQA (66 aa). S1995 carries the post-translational modification Phosphoserine. N6-acetyllysine; alternate is present on K2005. Residue K2005 forms a Glycyl lysine isopeptide (Lys-Gly) (interchain with G-Cter in SUMO2); alternate linkage. T2022 carries the phosphothreonine; by GSK3-beta modification. Residue T2024 is modified to Phosphothreonine. 4 positions are modified to phosphoserine: S2029, S2049, S2054, and S2066. In terms of domain architecture, UBA spans 2039–2078; sequence VEVKDIELVMSQANVSRAKAVRALKNNSNDIVNAIMELTM.

As to quaternary structure, interacts (via PXLXP motif) with the muscle-restricted histone methyltransferase SMYD1 (via MYND-type zinc finger).

It localises to the cytoplasm. It is found in the nucleus. Functionally, cardiac- and muscle-specific transcription factor. May act to regulate the expression of genes involved in the development of myotubes. Plays a critical role in ventricular cardiomyocyte expansion and regulates postnatal skeletal muscle growth and regeneration. Involved in the organized assembly of thick and thin filaments of myofibril sarcomeres. This Homo sapiens (Human) protein is Nascent polypeptide-associated complex subunit alpha, muscle-specific form (NACA).